The primary structure comprises 27 residues: MQLFHLCLVISCSCPTVQASKLCLGWL.

The sequence is that of Truncated HBeAg protein (C) from Chimpanzee hepatitis B virus (isolate United Kingdom/LSH/1988) (HBVcpz).